Here is a 299-residue protein sequence, read N- to C-terminus: Taste receptor type 2 member 50 (299 aa).

Residue methionine 1 is a topological domain, extracellular. A helical membrane pass occupies residues 2 to 22; sequence IPFLHIFFSVLILVLFVLGNF. The Cytoplasmic segment spans residues 23–55; that stretch reads ANGFIALVNFIDWVKRKKISLADQILTALAVSR. Residues 56–76 traverse the membrane as a helical segment; the sequence is VGLLWALLLNWYLTELNPAFY. At 77-87 the chain is on the extracellular side; it reads SVELRITSYNA. Residues 88–108 form a helical membrane-spanning segment; sequence WVVTNHFSMWLAASLSIFYLL. Over 109-126 the chain is Cytoplasmic; sequence KIANFSNLSFLNLKRRVR. The helical transmembrane segment at 127-147 threads the bilayer; sequence SIILVILLGSLLFLVCHLLAV. Over 148 to 181 the chain is Extracellular; sequence NMDENMWTEEYEGNMTGKMKLRNAAHLSYMTVTT. An N-linked (GlcNAc...) asparagine glycan is attached at asparagine 161. Residues 182–202 form a helical membrane-spanning segment; the sequence is LWSFIPFMLSLISFLMLIFSL. Residues 203–229 are Cytoplasmic-facing; the sequence is CKHLKKMQLHGEGSRDPSTTVHIKALQ. Residues 230–250 traverse the membrane as a helical segment; it reads TLISFLLLCAIFFLFLIISVW. Residues 251 to 259 lie on the Extracellular side of the membrane; that stretch reads SPRRLQNEP. Residues 260–280 form a helical membrane-spanning segment; it reads VFMVCKAVGNIYLSFDSFVLI. The Cytoplasmic portion of the chain corresponds to 281 to 299; that stretch reads WRTKKLKHIFLLILCQIRC.

This sequence belongs to the G-protein coupled receptor T2R family.

The protein resides in the membrane. Functionally, receptor that may play a role in the perception of bitterness and is gustducin-linked. May play a role in sensing the chemical composition of the gastrointestinal content. The activity of this receptor may stimulate alpha gustducin, mediate PLC-beta-2 activation and lead to the gating of TRPM5. The protein is Taste receptor type 2 member 50 (TAS2R50) of Macaca mulatta (Rhesus macaque).